We begin with the raw amino-acid sequence, 96 residues long: Large ribosomal subunit protein eL21 (96 aa).

Belongs to the eukaryotic ribosomal protein eL21 family.

The polypeptide is Large ribosomal subunit protein eL21 (Methanosphaerula palustris (strain ATCC BAA-1556 / DSM 19958 / E1-9c)).